We begin with the raw amino-acid sequence, 650 residues long: DNA gyrase subunit B (650 aa).

The segment covering 400-414 has biased composition (basic and acidic residues); that stretch reads RRSQEARELTRRKSP. The segment at 400–422 is disordered; the sequence is RRSQEARELTRRKSPFDSGSLPG. The Toprim domain maps to 435 to 549; it reads SELYIVEGDS…QGNIFIAQPP (115 aa). Positions 441, 514, and 516 each coordinate Mg(2+).

This sequence belongs to the type II topoisomerase GyrB family. In terms of assembly, heterotetramer, composed of two GyrA and two GyrB chains. In the heterotetramer, GyrA contains the active site tyrosine that forms a transient covalent intermediate with DNA, while GyrB binds cofactors and catalyzes ATP hydrolysis. The cofactor is Mg(2+). Requires Mn(2+) as cofactor. Ca(2+) is required as a cofactor.

It is found in the cytoplasm. The enzyme catalyses ATP-dependent breakage, passage and rejoining of double-stranded DNA.. A type II topoisomerase that negatively supercoils closed circular double-stranded (ds) DNA in an ATP-dependent manner to modulate DNA topology and maintain chromosomes in an underwound state. Negative supercoiling favors strand separation, and DNA replication, transcription, recombination and repair, all of which involve strand separation. Also able to catalyze the interconversion of other topological isomers of dsDNA rings, including catenanes and knotted rings. Type II topoisomerases break and join 2 DNA strands simultaneously in an ATP-dependent manner. This chain is DNA gyrase subunit B, found in Mycoplasma genitalium (strain ATCC 33530 / DSM 19775 / NCTC 10195 / G37) (Mycoplasmoides genitalium).